The primary structure comprises 318 residues: tRNA uridine(34) hydroxylase (318 aa).

In terms of domain architecture, Rhodanese spans 123–217 (EDDDTVIIDA…YGKDPETKSE (95 aa)). The active-site Cysteine persulfide intermediate is the C177.

Belongs to the TrhO family.

It carries out the reaction uridine(34) in tRNA + AH2 + O2 = 5-hydroxyuridine(34) in tRNA + A + H2O. Its function is as follows. Catalyzes oxygen-dependent 5-hydroxyuridine (ho5U) modification at position 34 in tRNAs. The sequence is that of tRNA uridine(34) hydroxylase from Staphylococcus aureus (strain COL).